A 266-amino-acid polypeptide reads, in one-letter code: Prolactin-7A1 (266 aa).

The first 30 residues, 1–30, serve as a signal peptide directing secretion; it reads MPLSFTQPCSSGALLLLVVSNLLLWENVAC. N-linked (GlcNAc...) asparagine glycosylation is found at Asn-36, Asn-58, Asn-110, Asn-149, and Asn-157. 2 disulfide bridges follow: Cys-114-Cys-231 and Cys-248-Cys-257.

It belongs to the somatotropin/prolactin family. Expressed specifically in the placenta. Detected only in the trophoblast giant cells.

The protein localises to the secreted. The chain is Prolactin-7A1 (Prl7a1) from Mus musculus (Mouse).